A 299-amino-acid chain; its full sequence is F-actin-capping protein subunit alpha-3 (299 aa).

A Phosphoserine modification is found at S290.

Belongs to the F-actin-capping protein alpha subunit family. In terms of assembly, component of the F-actin capping complex, composed of a heterodimer of an alpha and a beta subunit. Component of the WASH complex, composed of F-actin-capping protein subunit alpha (CAPZA1, CAPZA2 or CAPZA3), F-actin-capping protein subunit beta (CAPZB), WASHC1, WASHC2, WASHC3, WASHC4 and WASHC5.

Its function is as follows. F-actin-capping proteins bind in a Ca(2+)-independent manner to the fast growing ends of actin filaments (barbed end) thereby blocking the exchange of subunits at these ends. Unlike other capping proteins (such as gelsolin and severin), these proteins do not sever actin filaments. May play a role in the morphogenesis of spermatid. The protein is F-actin-capping protein subunit alpha-3 (CAPZA3) of Macaca fascicularis (Crab-eating macaque).